A 148-amino-acid polypeptide reads, in one-letter code: Probable calcium-binding protein CML7 (148 aa).

EF-hand domains follow at residues 9-44, 80-115, and 116-148; these read EQVA…LGGN, PFDR…IGEK, and LEPH…IVAK. 10 residues coordinate Ca(2+): D22, D24, D26, R28, E33, D93, D95, S97, T99, and D104.

In terms of biological role, potential calcium sensor. This Oryza sativa subsp. japonica (Rice) protein is Probable calcium-binding protein CML7 (CML7).